We begin with the raw amino-acid sequence, 427 residues long: Serine hydroxymethyltransferase (427 aa).

Residue 120 to 122 (GHI) participates in (6S)-5,6,7,8-tetrahydrofolate binding. Lys-226 bears the N6-(pyridoxal phosphate)lysine mark.

It belongs to the SHMT family. As to quaternary structure, homodimer. Pyridoxal 5'-phosphate serves as cofactor.

It localises to the cytoplasm. It participates in amino-acid biosynthesis; glycine biosynthesis; glycine from L-serine: step 1/1. Catalyzes the reversible interconversion of serine and glycine with a modified folate serving as the one-carbon carrier. Also exhibits a pteridine-independent aldolase activity toward beta-hydroxyamino acids, producing glycine and aldehydes, via a retro-aldol mechanism. The polypeptide is Serine hydroxymethyltransferase (Pyrococcus abyssi (strain GE5 / Orsay)).